The following is a 340-amino-acid chain: Anthranilate phosphoribosyltransferase (340 aa).

Residues glycine 78, 81–82 (GD), threonine 86, 88–91 (NIST), 106–114 (KHGNRSVSS), and serine 118 each bind 5-phospho-alpha-D-ribose 1-diphosphate. Position 78 (glycine 78) interacts with anthranilate. Position 90 (serine 90) interacts with Mg(2+). Anthranilate is bound at residue asparagine 109. Arginine 164 contributes to the anthranilate binding site. Aspartate 223 and glutamate 224 together coordinate Mg(2+).

The protein belongs to the anthranilate phosphoribosyltransferase family. As to quaternary structure, homodimer. Mg(2+) serves as cofactor.

It catalyses the reaction N-(5-phospho-beta-D-ribosyl)anthranilate + diphosphate = 5-phospho-alpha-D-ribose 1-diphosphate + anthranilate. Its pathway is amino-acid biosynthesis; L-tryptophan biosynthesis; L-tryptophan from chorismate: step 2/5. Catalyzes the transfer of the phosphoribosyl group of 5-phosphorylribose-1-pyrophosphate (PRPP) to anthranilate to yield N-(5'-phosphoribosyl)-anthranilate (PRA). This Bacillus pumilus (Bacillus mesentericus) protein is Anthranilate phosphoribosyltransferase.